The sequence spans 334 residues: Probable aminoacyl tRNA synthase complex-interacting multifunctional protein 2 (334 aa).

One can recognise a GST C-terminal domain in the interval 280-327 (LDKRLQKQQYFGGSQMSVADVGVYSSLIRMPAVTEKDLTPALVAWRKR).

Component of the aminoacyl-tRNA synthase complex which is comprised of a bifunctional glutamyl-prolyl-tRNA synthase, the monospecific isoleucyl, leucyl, glutaminyl, methionyl, lysyl, arginyl and aspartyl-tRNA synthases, and three auxiliary proteins.

Its subcellular location is the cytoplasm. The protein resides in the cytosol. The protein localises to the nucleus. Functionally, required for assembly and stability of the aminoacyl-tRNA synthase complex. This chain is Probable aminoacyl tRNA synthase complex-interacting multifunctional protein 2, found in Drosophila melanogaster (Fruit fly).